A 275-amino-acid polypeptide reads, in one-letter code: NH(3)-dependent NAD(+) synthetase (275 aa).

An ATP-binding site is contributed by 47–54 (GISGGQDS). Residue D53 participates in Mg(2+) binding. R141 lines the deamido-NAD(+) pocket. Residue T161 coordinates ATP. Residue E166 coordinates Mg(2+). The deamido-NAD(+) site is built by K174 and D181. ATP-binding residues include K190 and T212. Residue 261–262 (HK) participates in deamido-NAD(+) binding.

The protein belongs to the NAD synthetase family. As to quaternary structure, homodimer.

The enzyme catalyses deamido-NAD(+) + NH4(+) + ATP = AMP + diphosphate + NAD(+) + H(+). The protein operates within cofactor biosynthesis; NAD(+) biosynthesis; NAD(+) from deamido-NAD(+) (ammonia route): step 1/1. Functionally, catalyzes the ATP-dependent amidation of deamido-NAD to form NAD. Uses ammonia as a nitrogen source. This Lacticaseibacillus paracasei (strain ATCC 334 / BCRC 17002 / CCUG 31169 / CIP 107868 / KCTC 3260 / NRRL B-441) (Lactobacillus paracasei) protein is NH(3)-dependent NAD(+) synthetase.